The chain runs to 843 residues: Protein P (843 aa).

Residues 1–177 (MPLSYQHFRK…FCGSPYSWEQ (177 aa)) are terminal protein domain (TP). The interval 178–346 (DLQHGRLVIQ…YCLCHIVNLI (169 aa)) is spacer. Disordered stretches follow at residues 219 to 258 (RKSRLGPQPTQGQLAGRPQGGSGSIRARVHPSPWGTVGVE) and 297 to 316 (SSGHAVELHHFPPNSSRSQS). A polymerase/reverse transcriptase domain (RT) region spans residues 347–690 (DDWGPCAEHG…YLNLYPVARQ (344 aa)). The 244-residue stretch at 357 to 600 (EHRIRTPRTP…YSLNFMGYVI (244 aa)) folds into the Reverse transcriptase domain. Mg(2+) is bound by residues Asp429, Asp551, and Asp552.

Belongs to the hepadnaviridae P protein family.

The enzyme catalyses DNA(n) + a 2'-deoxyribonucleoside 5'-triphosphate = DNA(n+1) + diphosphate. The catalysed reaction is Endonucleolytic cleavage to 5'-phosphomonoester.. With respect to regulation, activated by host HSP70 and HSP40 in vitro to be able to bind the epsilon loop of the pgRNA. Because deletion of the RNase H region renders the protein partly chaperone-independent, the chaperones may be needed indirectly to relieve occlusion of the RNA-binding site by this domain. Inhibited by several reverse-transcriptase inhibitors: Lamivudine, Adefovir and Entecavir. Functionally, multifunctional enzyme that converts the viral RNA genome into dsDNA in viral cytoplasmic capsids. This enzyme displays a DNA polymerase activity that can copy either DNA or RNA templates, and a ribonuclease H (RNase H) activity that cleaves the RNA strand of RNA-DNA heteroduplexes in a partially processive 3'- to 5'-endonucleasic mode. Neo-synthesized pregenomic RNA (pgRNA) are encapsidated together with the P protein, and reverse-transcribed inside the nucleocapsid. Initiation of reverse-transcription occurs first by binding the epsilon loop on the pgRNA genome, and is initiated by protein priming, thereby the 5'-end of (-)DNA is covalently linked to P protein. Partial (+)DNA is synthesized from the (-)DNA template and generates the relaxed circular DNA (RC-DNA) genome. After budding and infection, the RC-DNA migrates in the nucleus, and is converted into a plasmid-like covalently closed circular DNA (cccDNA). The activity of P protein does not seem to be necessary for cccDNA generation, and is presumably released from (+)DNA by host nuclear DNA repair machinery. This chain is Protein P, found in Hepatitis B virus genotype B1 (isolate Japan/Ry30/2002) (HBV-B).